The sequence spans 154 residues: MESTIILIIILTASVLGRANSVALATCFLLILKLLNADKFIFPYLQENGLFLGLVILIASILIPIADGKVSYISIRNVFTSWLGIFALLVSLFTTYLSGLGMNYLTIQGHSEIMPALILGAVIAAAFLGGVPVGPMITSGLIALGLKLFNKIGS.

The next 4 helical transmembrane spans lie at Ile5–Ala25, Asn48–Gly68, Trp82–Met102, and Ile113–Val133.

This sequence belongs to the UPF0756 family.

The protein resides in the cell membrane. The chain is UPF0756 membrane protein CKR_1028 from Clostridium kluyveri (strain NBRC 12016).